We begin with the raw amino-acid sequence, 294 residues long: MRFVIVTGLSGAGKTQAIRSLEDLGFFCVDNLPPTLIPKFAEACYQTEGKIKKIALVIDIRGGKFFDDLFESLKYLKEEGYKYEILFLDASDEVLIKRFKESRRKHPLSPDGRILNGISMERNRLREVKDRADNIINTSELATRELREAINEIYGEHDQIENQLIITVLSFGFKHGIPLDSDLVFDVRFLPNPYYIKELKQYSGKDKKVSDYVMSFDVTNKFVNRLENMLDFLIPNYFKEGKRQLIISIGCTGGRHRSVAIANAIYEGLKSKGHKVNIDHRDINEDIHKGGKKL.

8–15 contributes to the ATP binding site; sequence GLSGAGKT. 59-62 provides a ligand contact to GTP; the sequence is DIRG.

The protein belongs to the RapZ-like family.

Displays ATPase and GTPase activities. The chain is Nucleotide-binding protein CLB_3433 from Clostridium botulinum (strain ATCC 19397 / Type A).